Consider the following 349-residue polypeptide: 2-oxoglutarate and iron-dependent oxygenase domain-containing protein 2 (349 aa).

Residues 211–305 form the Fe2OG dioxygenase domain; sequence DSHRAFVVKY…RWNLILWMRA (95 aa). The Fe cation site is built by His-231, Asp-233, and His-286. Position 296 (Arg-296) interacts with 2-oxoglutarate.

The protein belongs to the OGFOD2 family. The cofactor is Fe(2+). It depends on L-ascorbate as a cofactor.

The chain is 2-oxoglutarate and iron-dependent oxygenase domain-containing protein 2 (ogfod2) from Xenopus tropicalis (Western clawed frog).